The sequence spans 447 residues: Probable butyrate:acetyl-CoA coenzyme A-transferase (447 aa).

Residue 220-224 (GIGGT) coordinates CoA. Residue glutamate 245 is the 5-glutamyl coenzyme A thioester intermediate of the active site. CoA-binding residues include isoleucine 320 and glycine 343.

The protein belongs to the acetyl-CoA hydrolase/transferase family.

It localises to the cytoplasm. The enzyme catalyses butanoate + acetyl-CoA = butanoyl-CoA + acetate. It functions in the pathway lipid metabolism; butanoate metabolism. In terms of biological role, coenzyme A-transferase that converts butyrate to butyryl-CoA. Involved in the syntrophic growth of S.wolfei on butyrate in cooperation with methanogens or an appropriate hydrogen-scavenging bacterium, as part of the butyrate oxidation pathway. The protein is Probable butyrate:acetyl-CoA coenzyme A-transferase of Syntrophomonas wolfei subsp. wolfei (strain DSM 2245B / Goettingen).